The primary structure comprises 544 residues: Probable protein kinase UbiB (544 aa).

The 379-residue stretch at 123–501 folds into the Protein kinase domain; it reads DFDLVPLASA…KRQQATGKFL (379 aa). ATP contacts are provided by residues 129–137 and K152; that span reads LASASIAQV. D287 serves as the catalytic Proton acceptor. Helical transmembrane passes span 496-516 and 519-539; these read ATGKFLFGVGATLVVCSAILV and TYEQLSLATAIAGVTFWLFSW.

This sequence belongs to the ABC1 family. UbiB subfamily.

It localises to the cell inner membrane. The protein operates within cofactor biosynthesis; ubiquinone biosynthesis [regulation]. In terms of biological role, is probably a protein kinase regulator of UbiI activity which is involved in aerobic coenzyme Q (ubiquinone) biosynthesis. The chain is Probable protein kinase UbiB from Vibrio vulnificus (strain YJ016).